We begin with the raw amino-acid sequence, 114 residues long: Protein S100-A9 (114 aa).

A Blocked amino end (Thr) modification is found at Thr2. Cys3 is modified (S-nitrosocysteine; transient). 2 EF-hand domains span residues 12 to 47 (IETI…DLQN) and 54 to 89 (KNEK…LTWA). His20 is a Zn(2+) binding site. The Ca(2+) site is built by Ser23, Leu26, and His28. Zn(2+) is bound at residue Asp30. Positions 31, 36, 67, 69, 71, 73, and 78 each coordinate Ca(2+). His91 and His95 together coordinate Zn(2+). Over residues 93-102 (KMHEGDEGPG) the composition is skewed to basic and acidic residues. A disordered region spans residues 93–114 (KMHEGDEGPGHHHKPGLGEGTP). Position 105 is a pros-methylhistidine (His105). A Phosphothreonine; by MAPK14 modification is found at Thr113.

Homodimer. Preferentially exists as a heterodimer or heterotetramer with S100A8 known as calprotectin (S100A8/A9). S100A9 interacts with ATP2A2. S100A9 interacts with AGER, and with the heterodimeric complex formed by TLR4 and LY96 in the presence of calcium and/or zinc ions. S100A9 binds quinoline-3-carboxamides in the presence of calcium and/or zinc ions. S100A9 interacts with amyloid-beta protein 40. Calprotectin (S100A8/9) interacts with CEACAM3 and tubulin filaments in a calcium-dependent manner. Heterotetrameric calprotectin (S100A8/A9) interacts with ANXA6 and associates with tubulin filaments in activated monocytes. Calprotectin (S100A8/9) interacts with NCF2/P67PHOX, RAC1, RAC2, CYBA and CYBB. Calprotectin (S100A8/9) interacts with NOS2 to form the iNOS-S100A8/A9 transnitrosylase complex; induced by LDL(ox). Calprotectin (S100A8/9) interacts with CD69. Post-translationally, phosphorylated. Phosphorylation inhibits activation of tubulin polymerization. S-nitrosylation of Cys-3 is implicated in LDL(ox)-induced S-nitrosylation of GAPDH at 'Cys-247' through a transnitrosylase mechanism involving a iNOS-S100A8/9 complex. In terms of processing, methylation at His-105 by METTL9 reduces zinc-binding without affecting heterodimerization with S100A8. As to expression, calprotectin (S100A8/9) is predominantly expressed in myeloid cells. Except for inflammatory conditions, the expression is restricted to a specific stage of myeloid differentiation since both proteins are expressed in circulating neutrophils and monocytes but are absent in normal tissue macrophages and lymphocytes. Under chronic inflammatory conditions, such as psoriasis and malignant disorders, also expressed in the epidermis. Found in high concentrations at local sites of inflammation or in the serum of patients with inflammatory diseases such as rheumatoid, cystic fibrosis, inflammatory bowel disease, Crohn's disease, giant cell arteritis, cystic fibrosis, Sjogren's syndrome, systemic lupus erythematosus, and progressive systemic sclerosis. Involved in the formation and deposition of amyloids in the aging prostate known as corpora amylacea inclusions. Strongly up-regulated in many tumors, including gastric, esophageal, colon, pancreatic, bladder, ovarian, thyroid, breast and skin cancers.

Its subcellular location is the secreted. The protein resides in the cytoplasm. It is found in the cytoskeleton. It localises to the cell membrane. In terms of biological role, S100A9 is a calcium- and zinc-binding protein which plays a prominent role in the regulation of inflammatory processes and immune response. It can induce neutrophil chemotaxis, adhesion, can increase the bactericidal activity of neutrophils by promoting phagocytosis via activation of SYK, PI3K/AKT, and ERK1/2 and can induce degranulation of neutrophils by a MAPK-dependent mechanism. Predominantly found as calprotectin (S100A8/A9) which has a wide plethora of intra- and extracellular functions. The intracellular functions include: facilitating leukocyte arachidonic acid trafficking and metabolism, modulation of the tubulin-dependent cytoskeleton during migration of phagocytes and activation of the neutrophilic NADPH-oxidase. Also participates in regulatory T-cell differentiation together with CD69. Activates NADPH-oxidase by facilitating the enzyme complex assembly at the cell membrane, transferring arachidonic acid, an essential cofactor, to the enzyme complex and S100A8 contributes to the enzyme assembly by directly binding to NCF2/P67PHOX. The extracellular functions involve pro-inflammatory, antimicrobial, oxidant-scavenging and apoptosis-inducing activities. Its pro-inflammatory activity includes recruitment of leukocytes, promotion of cytokine and chemokine production, and regulation of leukocyte adhesion and migration. Acts as an alarmin or a danger associated molecular pattern (DAMP) molecule and stimulates innate immune cells via binding to pattern recognition receptors such as Toll-like receptor 4 (TLR4) and receptor for advanced glycation endproducts (AGER). Binding to TLR4 and AGER activates the MAP-kinase and NF-kappa-B signaling pathways resulting in the amplification of the pro-inflammatory cascade. Has antimicrobial activity towards bacteria and fungi and exerts its antimicrobial activity probably via chelation of Zn(2+) which is essential for microbial growth. Can induce cell death via autophagy and apoptosis and this occurs through the cross-talk of mitochondria and lysosomes via reactive oxygen species (ROS) and the process involves BNIP3. Can regulate neutrophil number and apoptosis by an anti-apoptotic effect; regulates cell survival via ITGAM/ITGB and TLR4 and a signaling mechanism involving MEK-ERK. Its role as an oxidant scavenger has a protective role in preventing exaggerated tissue damage by scavenging oxidants. Can act as a potent amplifier of inflammation in autoimmunity as well as in cancer development and tumor spread. Has transnitrosylase activity; in oxidatively-modified low-densitity lipoprotein (LDL(ox))-induced S-nitrosylation of GAPDH on 'Cys-247' proposed to transfer the NO moiety from NOS2/iNOS to GAPDH via its own S-nitrosylated Cys-3. The iNOS-S100A8/A9 transnitrosylase complex is proposed to also direct selective inflammatory stimulus-dependent S-nitrosylation of multiple targets such as ANXA5, EZR, MSN and VIM by recognizing a [IL]-x-C-x-x-[DE] motif. This is Protein S100-A9 from Homo sapiens (Human).